Here is a 1832-residue protein sequence, read N- to C-terminus: Zinc finger protein 646 (1832 aa).

C2H2-type zinc fingers lie at residues 8 to 31 (LSCSDCQRHFPSLPELSRHRELLH), 48 to 70 (YRCQQCGRGYRHPGSLVNHRRTH), 75 to 97 (FPCTTCGKDFSNPMALKSHMRTH), 239 to 261 (YKCSQCGKTYKHAGSLTNHRQSH), 266 to 288 (YPCAICFKEFSNLMALKNHSRLH), 294 to 316 (YHCPHCPRVFRLPRELLEHQQSH), 374 to 396 (FRCGDCGRTYRHAGSLINHRKSH), and 401 to 424 (YPCSLCSKQLFNAAALKNHVRAHH). Residues 26–47 (HRELLHPSPNQDSEEADSIPRP) form a disordered region. Residues 94–108 (MRTHAPEGRRRHRPP) are compositionally biased toward basic residues. The segment at 94 to 200 (MRTHAPEGRR…TNSARAPPLP (107 aa)) is disordered. The span at 313 to 329 (QQSHEGERQEPRWEEKG) shows a compositional bias: basic and acidic residues. A disordered region spans residues 313–346 (QQSHEGERQEPRWEEKGMPTTNGHTDESSQDQLP). Residue Lys451 forms a Glycyl lysine isopeptide (Lys-Gly) (interchain with G-Cter in SUMO2) linkage. C2H2-type zinc fingers lie at residues 465 to 487 (YKCSECGRAYRHRGSLVNHRHSH) and 492 to 514 (YQCSLCPRKYPNLMALRNHVRVH). Residues Lys534 and Lys557 each participate in a glycyl lysine isopeptide (Lys-Gly) (interchain with G-Cter in SUMO2) cross-link. The C2H2-type 11 zinc finger occupies 575 to 597 (HICSICGLLFEDAESLERHGLTH). At Ser612 the chain carries Phosphoserine. C2H2-type zinc fingers lie at residues 617–639 (FACRDCGKSYRHSGSLINHRQTH) and 644–666 (FSCGACAKHFHTMAAMKNHLRRH). The segment at 660 to 810 (KNHLRRHSRR…QPNSSSHSAN (151 aa)) is disordered. Residues 661-678 (NHLRRHSRRRSRRHRKRA) show a composition bias toward basic residues. Lys688 participates in a covalent cross-link: Glycyl lysine isopeptide (Lys-Gly) (interchain with G-Cter in SUMO2). The span at 735 to 767 (EGDKCGLERDETHFQGDKESGGTGEGLERKDAS) shows a compositional bias: basic and acidic residues. Residues 798 to 810 (ATGQPNSSSHSAN) are compositionally biased toward polar residues. 3 consecutive C2H2-type zinc fingers follow at residues 821–843 (HTCSDCGHSFPHATGLLSHRPCH), 848–870 (YQCSLCPKEFDSLPALRSHFQNH), and 881–904 (FLCCLCGMIFPGRAGYRLHRRQAH). Residues 901–931 (RQAHSSSGMTEGSEEEGEEEGVAEAAPARSP) are disordered. Residues 912-922 (GSEEEGEEEGV) are compositionally biased toward acidic residues. The segment at 958 to 980 (HICGCCGQTYDDLGSLERHHQSQ) adopts a C2H2-type 17; degenerate zinc-finger fold. C2H2-type zinc fingers lie at residues 1052–1074 (FRCNQCGKTYRHGGSLVNHRKIH) and 1079–1101 (FLCPVCSRCYPNLAAYRNHLRNH). The segment at 1103–1148 (RCKGSEPQVGPIPEAAGSSELQVGPIPEGGSNKPQHMAEEGPGQAE) is disordered. Residues Lys1157, Lys1168, and Lys1178 each participate in a glycyl lysine isopeptide (Lys-Gly) (interchain with G-Cter in SUMO2) cross-link. C2H2-type zinc fingers lie at residues 1203 to 1225 (FSCEVCGRSYKHAGSLINHRQSH), 1230 to 1252 (FGCQACSKGFSNLMSLKNHRRIH), 1258 to 1280 (FRCSECGKAFRLRKQLASHQRVH), 1299 to 1321 (FRCGQCGRTYRHAGSLLNHRRSH), 1326 to 1348 (YSCPTCPKTYSNRMALKDHQRLH), and 1364 to 1386 (VRCALCGRSFPGRGSLERHLREH). Positions 1274-1294 (ASHQRVHMERRGGGGTRKATR) are disordered. 2 disordered regions span residues 1377-1481 (GSLE…WVPQ) and 1509-1529 (TLSHMDSWDNRDNSSQLQPGS). The span at 1378 to 1393 (SLERHLREHEETEREP) shows a compositional bias: basic and acidic residues. Polar residues predominate over residues 1406–1417 (SEANLTGSQGLE). Over residues 1427-1438 (PHLEDGVPRPGE) the composition is skewed to basic and acidic residues. The span at 1460 to 1475 (GKAGGWPVGGGLGNHS) shows a compositional bias: gly residues. 6 consecutive C2H2-type zinc fingers follow at residues 1557-1579 (HYCLLCSKEFLNPVATKSHSHNH), 1585-1607 (FACPDCGKAFESHQELASHLQAH), 1677-1699 (FRCTQCGRSYRHAGSLLNHQKAH), 1704-1726 (YPCSLCPKLLPNLLSLKNHSRTH), 1732-1754 (HCCSICGKAFRTAARLEGHGRVH), and 1761-1783 (FTCPHCPRHFRRRISFVQHQQQH). The interval 1606 to 1672 (AHARGHSQVP…QAVTSMAAED (67 aa)) is disordered. The tract at residues 1781–1832 (QQHQEEWTVAGSGAPVAPVTGRGDLPLPPPPTPTTPLLDPSPQWPADLSFSL) is disordered.

The protein belongs to the krueppel C2H2-type zinc-finger protein family.

It is found in the nucleus. Functionally, may be involved in transcriptional regulation. This chain is Zinc finger protein 646, found in Homo sapiens (Human).